The chain runs to 2778 residues: Probable ubiquitin carboxyl-terminal hydrolase FAF (2778 aa).

The disordered stretch occupies residues 1–85 (MTFDTRRHTT…SQSSDDVAAS (85 aa)). The segment covering 10–39 (TGQPGSTAPSSSSSTTSTTTTTTSPAQSAG) has biased composition (low complexity). Residues 71-85 (QPATDSQSSDDVAAS) show a composition bias toward polar residues. Ser924 carries the phosphoserine modification. The segment at 1065–1094 (GTGLASSPDSSSDSSTGSPPRPCPDMQRVE) is disordered. Residues 1070–1082 (SSPDSSSDSSTGS) are compositionally biased toward low complexity. Positions 1668-2062 (CGLKNAGATC…NAYMLFYTRC (395 aa)) constitute a USP domain. Cys1677 (nucleophile) is an active-site residue. Catalysis depends on His1986, which acts as the Proton acceptor. Disordered regions lie at residues 2568–2632 (VSEK…GDSN) and 2644–2691 (AYTS…INGL). Low complexity-rich tracts occupy residues 2614–2627 (TPTT…AWPA) and 2644–2671 (AYTS…GSGA). Polar residues predominate over residues 2672 to 2691 (NSETESSAQETTGETTINGL).

Belongs to the peptidase C19 family. In terms of assembly, interacts with imd. Post-translationally, ubiquitinated. Ubiquitination is enhanced by the expression of imd. As to expression, eye disks and ovaries. Expressed in larval fat body.

It catalyses the reaction Thiol-dependent hydrolysis of ester, thioester, amide, peptide and isopeptide bonds formed by the C-terminal Gly of ubiquitin (a 76-residue protein attached to proteins as an intracellular targeting signal).. In terms of biological role, ubiquitin C-terminal hydrolase involved in development and the imd/NF-kappa-B (IMD) signaling cascade. Required for eye and embryo development, and plays a role in compound eye assembly and oogenesis respectively. In the larval eye disks, cells outside the assembling facets require this protein for short-range cell interactions that prevent the mystery cells from becoming photoreceptors. Also required for nuclear migration and cellularization in early embryogenesis and could play a role in pole cell determination, development or function. Regulates the IMD signaling cascade at later stages of infection (around 6 hours post-infection) by inhibiting the expression of the antimicrobial peptides Dpt and Dro. Acts by modulating the state of imd polyubiquitination and/or stability; a function which appears to be independent of its enzymatic activity. In turn, imd enhances the polyubiquitination and stability of faf suggesting that they may form a regulatory feedback mechanism within the Imd pathway. The polypeptide is Probable ubiquitin carboxyl-terminal hydrolase FAF (faf) (Drosophila melanogaster (Fruit fly)).